Reading from the N-terminus, the 214-residue chain is Nucleoplasmin-2 (214 aa).

Positions 119–214 are disordered; sequence ERYEASDLTW…ARAKKPGFKK (96 aa). A compositionally biased stretch (acidic residues) spans 127 to 155; the sequence is TWEEEEEEEGEEEEEEEEDDEDEDADISL. Positions 129–152 are acidic tract A2; sequence EEEEEEEGEEEEEEEEDDEDEDAD. Positions 165-180 match the Bipartite nuclear localization signal motif; it reads KRLVPQKQASVAKKKK. Residues 181–197 show a composition bias toward basic and acidic residues; sequence LEKEEEEIRASVRDKSP. Basic residues predominate over residues 198-214; the sequence is VKKAKATARAKKPGFKK.

It belongs to the nucleoplasmin family. In terms of assembly, homopentamer, when bound to H2A-H2B dimers only. Homodecamer of two stacked pentamers, when bound to H2A-H2B dimers and H3-H4 tetramers simultaneously.

The protein localises to the nucleus. Functionally, core histones chaperone involved in chromatin reprogramming, specially during fertilization and early embryonic development. Probably involved in sperm DNA decondensation during fertilization. The protein is Nucleoplasmin-2 (NPM2) of Homo sapiens (Human).